Reading from the N-terminus, the 359-residue chain is Heat-inducible transcription repressor HrcA (359 aa).

Belongs to the HrcA family.

Negative regulator of class I heat shock genes (grpE-dnaK-dnaJ and groELS operons). Prevents heat-shock induction of these operons. This Roseiflexus sp. (strain RS-1) protein is Heat-inducible transcription repressor HrcA.